The primary structure comprises 348 residues: Ion-translocating oxidoreductase complex subunit D (348 aa).

The next 5 helical transmembrane spans lie at 15–35, 36–56, 67–87, 88–108, and 125–145; these read LTAK…GMQA, YFFG…AVAI, PTAF…LAIS, IPPY…LLLA, and VAYA…LVPI. Position 186 is an FMN phosphoryl threonine (T186). The next 5 helical transmembrane spans lie at 212-232, 241-261, 265-285, 298-318, and 320-340; these read LFAN…LLLI, IPAA…LLLP, LNVV…FIAT, LIFG…GNYP, and AVAF…HYTQ.

It belongs to the NqrB/RnfD family. The complex is composed of six subunits: RnfA, RnfB, RnfC, RnfD, RnfE and RnfG. FMN is required as a cofactor.

The protein localises to the cell inner membrane. Functionally, part of a membrane-bound complex that couples electron transfer with translocation of ions across the membrane. This Actinobacillus pleuropneumoniae serotype 5b (strain L20) protein is Ion-translocating oxidoreductase complex subunit D.